Here is a 183-residue protein sequence, read N- to C-terminus: Phosphopantetheine adenylyltransferase (183 aa).

Residue Thr-13 participates in substrate binding. Residues 13–14 and His-21 contribute to the ATP site; that span reads TF. The substrate site is built by Lys-45, Leu-81, and Arg-95. ATP contacts are provided by residues 96–98, Glu-106, and 131–137; these read GLR and HQFISSR.

The protein belongs to the bacterial CoaD family. Homohexamer. Requires Mg(2+) as cofactor.

It is found in the cytoplasm. The enzyme catalyses (R)-4'-phosphopantetheine + ATP + H(+) = 3'-dephospho-CoA + diphosphate. Its pathway is cofactor biosynthesis; coenzyme A biosynthesis; CoA from (R)-pantothenate: step 4/5. Reversibly transfers an adenylyl group from ATP to 4'-phosphopantetheine, yielding dephospho-CoA (dPCoA) and pyrophosphate. This chain is Phosphopantetheine adenylyltransferase, found in Rhodospirillum centenum (strain ATCC 51521 / SW).